The following is a 1399-amino-acid chain: DNA-directed RNA polymerase subunit beta' (1399 aa).

Residues C70, C72, C85, and C88 each contribute to the Zn(2+) site. Mg(2+) contacts are provided by D460, D462, and D464. Positions 814, 888, 895, and 898 each coordinate Zn(2+).

The protein belongs to the RNA polymerase beta' chain family. As to quaternary structure, the RNAP catalytic core consists of 2 alpha, 1 beta, 1 beta' and 1 omega subunit. When a sigma factor is associated with the core the holoenzyme is formed, which can initiate transcription. It depends on Mg(2+) as a cofactor. Requires Zn(2+) as cofactor.

The catalysed reaction is RNA(n) + a ribonucleoside 5'-triphosphate = RNA(n+1) + diphosphate. Functionally, DNA-dependent RNA polymerase catalyzes the transcription of DNA into RNA using the four ribonucleoside triphosphates as substrates. This Pseudomonas putida (strain ATCC 47054 / DSM 6125 / CFBP 8728 / NCIMB 11950 / KT2440) protein is DNA-directed RNA polymerase subunit beta'.